Here is a 302-residue protein sequence, read N- to C-terminus: Intermediate capsid protein VP8 (302 aa).

The protein localises to the virion. Functionally, self assembles to form an icosahedral capsid with a T=13 symmetry, which consists of 230 trimers, with channels at each of its five-fold vertices. This chain is Intermediate capsid protein VP8 (Segment-8), found in Banna virus (BAV).